The sequence spans 881 residues: DNA replication helicase (881 aa).

Residues 1–32 (MESADILPGSRGTVDRRCEGSEEKITPPRPVE) are disordered. A compositionally biased stretch (basic and acidic residues) spans 13-32 (TVDRRCEGSEEKITPPRPVE). Position 105–112 (105–112 (GNAGSGKS)) interacts with ATP.

It belongs to the herpesviridae helicase family. As to quaternary structure, associates with the primase and the primase-associated factor to form the helicase-primase complex.

It is found in the host nucleus. Functionally, component of the helicase/primase complex. Unwinds the DNA at the replication forks and generates single-stranded DNA for both leading and lagging strand synthesis. The primase synthesizes short RNA primers on the lagging strand that the polymerase elongates using dNTPs. Possesses helicase-like motifs and therefore may act as the helicase subunit of the complex. This Equus caballus (Horse) protein is DNA replication helicase.